The primary structure comprises 147 residues: MHTIIELDNQTTLNVDIEALEKIAQSLTNREIELIITDNENIQELNREYRDRDNPTDVLSFPLETPFTEQSVFDIPLGTIVISADFVRERAKTYGHTEQDELKLLFIHGLLHLLGYDHETDEGEMRQKEREIIEEFGLPSSLIIRND.

Zn(2+) is bound by residues His108, His112, and His118.

It belongs to the endoribonuclease YbeY family. Zn(2+) is required as a cofactor.

It localises to the cytoplasm. Functionally, single strand-specific metallo-endoribonuclease involved in late-stage 70S ribosome quality control and in maturation of the 3' terminus of the 16S rRNA. The protein is Endoribonuclease YbeY of Sulfurovum sp. (strain NBC37-1).